The sequence spans 100 residues: Urease subunit gamma (100 aa).

The protein belongs to the urease gamma subunit family. As to quaternary structure, heterotrimer of UreA (gamma), UreB (beta) and UreC (alpha) subunits. Three heterotrimers associate to form the active enzyme.

It is found in the cytoplasm. The catalysed reaction is urea + 2 H2O + H(+) = hydrogencarbonate + 2 NH4(+). It participates in nitrogen metabolism; urea degradation; CO(2) and NH(3) from urea (urease route): step 1/1. The sequence is that of Urease subunit gamma from Roseobacter denitrificans (strain ATCC 33942 / OCh 114) (Erythrobacter sp. (strain OCh 114)).